The following is an 81-amino-acid chain: Sulfur carrier protein TusA (81 aa).

Residue C20 is the Cysteine persulfide intermediate of the active site.

Belongs to the sulfur carrier protein TusA family.

Its subcellular location is the cytoplasm. Functionally, sulfur carrier protein which probably makes part of a sulfur-relay system. This chain is Sulfur carrier protein TusA, found in Colwellia psychrerythraea (strain 34H / ATCC BAA-681) (Vibrio psychroerythus).